The sequence spans 480 residues: F-box only protein 3 (480 aa).

Residues 10–56 enclose the F-box domain; it reads LLTLESLPTDPLLLILSFVDYRDLINCCYVSRRLSQLSTHDPLWRRH. The ApaG domain occupies 278-408; that stretch reads VATTGDITVS…FHMACPTFRV (131 aa). Over residues 419-459 the composition is skewed to acidic residues; that stretch reads EYEEMEEEAEEEEEEENDDSADMDESDESDEDENESDEGEG. Residues 419-464 are disordered; the sequence is EYEEMEEEAEEEEEEENDDSADMDESDESDEDENESDEGEGEERRR.

Part of a SCF (SKP1-cullin-F-box) protein ligase complex SCF(FBXO3) consisting of FBXO3, SKP1, CUL1 and RBX1. Interacts with PML, interaction is direct and takes place either alone or within the SCF complex.

It is found in the nucleus. It participates in protein modification; protein ubiquitination. Functionally, substrate recognition component of the SCF (SKP1-CUL1-F-box protein)-type E3 ubiquitin ligase complex, SCF(FBXO3), which mediates the ubiquitination and subsequent proteasomal degradation of target proteins. Mediates the ubiquitination of HIPK2 and probably that of EP300, leading to rapid degradation by the proteasome. In the presence of PML, HIPK2 ubiquitination still occurs, but degradation is prevented. PML, HIPK2 and FBXO3 may act synergically to activate p53/TP53-dependent transactivation. The SCF(FBXO3) also acts as a regulator of inflammation by mediating ubiquitination and degradation of FBXL2 in response to lipopolysaccharide (LPS). The SCF(FBXO3) complex specifically recognizes FBXL2 phosphorylated at 'Thr-404' and promotes its ubiquitination. The polypeptide is F-box only protein 3 (Fbxo3) (Rattus norvegicus (Rat)).